We begin with the raw amino-acid sequence, 403 residues long: Phosphopentomutase (403 aa).

Mn(2+)-binding residues include aspartate 13, aspartate 298, histidine 303, aspartate 339, histidine 340, and histidine 351.

The protein belongs to the phosphopentomutase family. It depends on Mn(2+) as a cofactor.

Its subcellular location is the cytoplasm. It catalyses the reaction 2-deoxy-alpha-D-ribose 1-phosphate = 2-deoxy-D-ribose 5-phosphate. The catalysed reaction is alpha-D-ribose 1-phosphate = D-ribose 5-phosphate. The protein operates within carbohydrate degradation; 2-deoxy-D-ribose 1-phosphate degradation; D-glyceraldehyde 3-phosphate and acetaldehyde from 2-deoxy-alpha-D-ribose 1-phosphate: step 1/2. Its function is as follows. Isomerase that catalyzes the conversion of deoxy-ribose 1-phosphate (dRib-1-P) and ribose 1-phosphate (Rib-1-P) to deoxy-ribose 5-phosphate (dRib-5-P) and ribose 5-phosphate (Rib-5-P), respectively. This Streptococcus pneumoniae serotype 2 (strain D39 / NCTC 7466) protein is Phosphopentomutase.